A 305-amino-acid chain; its full sequence is Non-homologous end joining protein Ku (305 aa).

One can recognise a Ku domain in the interval 16–202 (SLVSFGISLI…KVDPEQLSLA (187 aa)). The tract at residues 263 to 305 (GEENGRKKSVSGAQHRSRRKSKGEQKLKVVRSGSSSDKRRKSA) is disordered.

The protein belongs to the prokaryotic Ku family. Homodimer. Interacts with LigD.

With LigD forms a non-homologous end joining (NHEJ) DNA repair enzyme, which repairs dsDNA breaks with reduced fidelity. Binds linear dsDNA with 5'- and 3'- overhangs but not closed circular dsDNA nor ssDNA. Recruits and stimulates the ligase activity of LigD. The sequence is that of Non-homologous end joining protein Ku from Acidobacterium capsulatum (strain ATCC 51196 / DSM 11244 / BCRC 80197 / JCM 7670 / NBRC 15755 / NCIMB 13165 / 161).